We begin with the raw amino-acid sequence, 338 residues long: Ketol-acid reductoisomerase (NADP(+)) (338 aa).

The 181-residue stretch at Met1–Thr181 folds into the KARI N-terminal Rossmann domain. Residues Tyr24–Gln27, Lys47, Ser50, Ser52, and Asp82–Gln85 contribute to the NADP(+) site. The active site involves His107. Residue Gly133 coordinates NADP(+). One can recognise a KARI C-terminal knotted domain in the interval Ser182–Ile327. Residues Asp190, Glu194, Glu226, and Glu230 each contribute to the Mg(2+) site. Position 251 (Ser251) interacts with substrate.

The protein belongs to the ketol-acid reductoisomerase family. Mg(2+) serves as cofactor.

It catalyses the reaction (2R)-2,3-dihydroxy-3-methylbutanoate + NADP(+) = (2S)-2-acetolactate + NADPH + H(+). The enzyme catalyses (2R,3R)-2,3-dihydroxy-3-methylpentanoate + NADP(+) = (S)-2-ethyl-2-hydroxy-3-oxobutanoate + NADPH + H(+). The protein operates within amino-acid biosynthesis; L-isoleucine biosynthesis; L-isoleucine from 2-oxobutanoate: step 2/4. Its pathway is amino-acid biosynthesis; L-valine biosynthesis; L-valine from pyruvate: step 2/4. Involved in the biosynthesis of branched-chain amino acids (BCAA). Catalyzes an alkyl-migration followed by a ketol-acid reduction of (S)-2-acetolactate (S2AL) to yield (R)-2,3-dihydroxy-isovalerate. In the isomerase reaction, S2AL is rearranged via a Mg-dependent methyl migration to produce 3-hydroxy-3-methyl-2-ketobutyrate (HMKB). In the reductase reaction, this 2-ketoacid undergoes a metal-dependent reduction by NADPH to yield (R)-2,3-dihydroxy-isovalerate. The sequence is that of Ketol-acid reductoisomerase (NADP(+)) from Geotalea uraniireducens (strain Rf4) (Geobacter uraniireducens).